A 435-amino-acid chain; its full sequence is Methionine aminopeptidase 2 (435 aa).

The tract at residues 57 to 77 is disordered; it reads AIDGDQAAAKKKKSKKKKKKA. Positions 65 to 77 are enriched in basic residues; that stretch reads AKKKKSKKKKKKA. Residue H188 participates in substrate binding. Residues D208, D219, and H288 each coordinate a divalent metal cation. Residue H296 coordinates substrate. Positions 321 and 416 each coordinate a divalent metal cation.

The protein belongs to the peptidase M24A family. Methionine aminopeptidase eukaryotic type 2 subfamily. The cofactor is Co(2+). It depends on Zn(2+) as a cofactor. Requires Mn(2+) as cofactor. Fe(2+) serves as cofactor.

It is found in the cytoplasm. It catalyses the reaction Release of N-terminal amino acids, preferentially methionine, from peptides and arylamides.. Functionally, cotranslationally removes the N-terminal methionine from nascent proteins. The N-terminal methionine is often cleaved when the second residue in the primary sequence is small and uncharged (Met-Ala-, Cys, Gly, Pro, Ser, Thr, or Val). In Clavispora lusitaniae (strain ATCC 42720) (Yeast), this protein is Methionine aminopeptidase 2.